The chain runs to 703 residues: Probable ATP-dependent RNA helicase DHX35 (703 aa).

One can recognise a Helicase ATP-binding domain in the interval 64-229 (LYLIENYQTV…FNQNETSDPA (166 aa)). An ATP-binding site is contributed by 77-84 (GETGCGKS). Positions 176 to 179 (DEAH) match the DEAH box motif. The region spanning 261–438 (TVETVVKIHQ…PVILQLKALG (178 aa)) is the Helicase C-terminal domain.

The protein belongs to the DEAD box helicase family. DEAH subfamily. In terms of assembly, identified in the spliceosome C complex.

It carries out the reaction ATP + H2O = ADP + phosphate + H(+). In terms of biological role, may be involved in pre-mRNA splicing. The sequence is that of Probable ATP-dependent RNA helicase DHX35 (DHX35) from Homo sapiens (Human).